The sequence spans 232 residues: Small ribosomal subunit protein uS2 (232 aa).

Belongs to the universal ribosomal protein uS2 family.

In Carboxydothermus hydrogenoformans (strain ATCC BAA-161 / DSM 6008 / Z-2901), this protein is Small ribosomal subunit protein uS2.